The primary structure comprises 341 residues: Phenylalanine--tRNA ligase alpha subunit (341 aa).

E256 contributes to the Mg(2+) binding site.

It belongs to the class-II aminoacyl-tRNA synthetase family. Phe-tRNA synthetase alpha subunit type 1 subfamily. As to quaternary structure, tetramer of two alpha and two beta subunits. It depends on Mg(2+) as a cofactor.

The protein resides in the cytoplasm. It carries out the reaction tRNA(Phe) + L-phenylalanine + ATP = L-phenylalanyl-tRNA(Phe) + AMP + diphosphate + H(+). The polypeptide is Phenylalanine--tRNA ligase alpha subunit (Clostridium perfringens (strain 13 / Type A)).